Here is a 51-residue protein sequence, read N- to C-terminus: Small, acid-soluble spore protein K (51 aa).

The tract at residues 1–51 is disordered; sequence MRNKAKGFPNPISFNGNKANNADEHASKRPDGTTRDRPQERMRSSNHFNSL. Residues 21–43 are compositionally biased toward basic and acidic residues; that stretch reads NADEHASKRPDGTTRDRPQERMR.

It belongs to the SspK family.

The protein resides in the spore core. In Shouchella clausii (strain KSM-K16) (Alkalihalobacillus clausii), this protein is Small, acid-soluble spore protein K.